A 287-amino-acid polypeptide reads, in one-letter code: MGLAGTKTKQRFGLDPRNTAWSNDTSRFGHLQLEKFGWKPGMGLGMSPTSSHKTHIKVSIKDDNLGLGAKIKRTERKDEFDNGECAGLDVFQRILGRLNGKQEEISKELDIQRKQKIIDGKWGIHFVRGDVLASTWDPETKKLKSYSNDKKRSRDDDDEKLSSKNKSKKQKKDKKDKKDKKDKKDKKDKKDKKDKTEKKEKKEKKEKKEKKEKKDKKDKKDKKDKIDKKDKKDKKSLKNNIEVSTTASNIPSTVSTRLSVRSRWIKQKRAATMDSKALNEIFMVTNT.

The 48-residue stretch at 25 to 72 (TSRFGHLQLEKFGWKPGMGLGMSPTSSHKTHIKVSIKDDNLGLGAKIK) folds into the G-patch domain. The segment covering 143–155 (LKSYSNDKKRSRD) has biased composition (basic and acidic residues). The disordered stretch occupies residues 143 to 254 (LKSYSNDKKR…TTASNIPSTV (112 aa)). Residues 163–190 (SKNKSKKQKKDKKDKKDKKDKKDKKDKK) are compositionally biased toward basic residues. The segment covering 191-200 (DKKDKTEKKE) has biased composition (basic and acidic residues). Basic residues predominate over residues 201 to 220 (KKEKKEKKEKKEKKDKKDKK). Basic and acidic residues predominate over residues 221–230 (DKKDKIDKKD). Positions 239–251 (NNIEVSTTASNIP) are enriched in polar residues.

This sequence belongs to the PINX1 family.

The protein resides in the nucleus. The protein localises to the nucleolus. In terms of biological role, involved in rRNA-processing at A0, A1 and A2 sites and negatively regulates telomerase. The polypeptide is Protein PXR1 (PXR1) (Vanderwaltozyma polyspora (strain ATCC 22028 / DSM 70294 / BCRC 21397 / CBS 2163 / NBRC 10782 / NRRL Y-8283 / UCD 57-17) (Kluyveromyces polysporus)).